We begin with the raw amino-acid sequence, 148 residues long: 3-hydroxyacyl-[acyl-carrier-protein] dehydratase FabZ (148 aa).

H50 is an active-site residue.

Belongs to the thioester dehydratase family. FabZ subfamily.

It localises to the cytoplasm. The catalysed reaction is a (3R)-hydroxyacyl-[ACP] = a (2E)-enoyl-[ACP] + H2O. In terms of biological role, involved in unsaturated fatty acids biosynthesis. Catalyzes the dehydration of short chain beta-hydroxyacyl-ACPs and long chain saturated and unsaturated beta-hydroxyacyl-ACPs. The chain is 3-hydroxyacyl-[acyl-carrier-protein] dehydratase FabZ from Levilactobacillus brevis (strain ATCC 367 / BCRC 12310 / CIP 105137 / JCM 1170 / LMG 11437 / NCIMB 947 / NCTC 947) (Lactobacillus brevis).